We begin with the raw amino-acid sequence, 854 residues long: Rod cGMP-specific 3',5'-cyclic phosphodiesterase subunit beta (854 aa).

Ser2 is modified (N-acetylserine). GAF domains lie at 71 to 220 (NMER…TLYL) and 252 to 429 (DIER…GWSV). In terms of domain architecture, PDEase spans 481 to 814 (DEDELGEILK…KEWKALADEY (334 aa)). Residue His557 is the Proton donor of the active site. Residues His561, His597, Asp598, and Asp718 each contribute to the a divalent metal cation site. Cys851 carries S-geranylgeranyl cysteine lipidation. Residues 852–854 (CIL) constitute a propeptide, removed in mature form.

This sequence belongs to the cyclic nucleotide phosphodiesterase family. As to quaternary structure, oligomer composed of two catalytic chains (alpha and beta), an inhibitory chain (gamma) and the delta chain. A divalent metal cation is required as a cofactor.

The protein resides in the membrane. It is found in the cell projection. It localises to the cilium. The protein localises to the photoreceptor outer segment. It carries out the reaction 3',5'-cyclic GMP + H2O = GMP + H(+). Rod-specific cGMP phosphodiesterase that catalyzes the hydrolysis of 3',5'-cyclic GMP. Necessary for the formation of a functional phosphodiesterase holoenzyme. Involved in retinal circadian rhythm photoentrainment via modulation of UVA and orange light-induced phase-shift of the retina clock. May participate in processes of transmission and amplification of the visual signal. The protein is Rod cGMP-specific 3',5'-cyclic phosphodiesterase subunit beta of Homo sapiens (Human).